Here is a 683-residue protein sequence, read N- to C-terminus: Protein kinase C eta type (683 aa).

In terms of domain architecture, C2 spans 1-118 (MSSGTMKFNG…LRTAGTSDTF (118 aa)). Serine 28 and serine 32 each carry phosphoserine. 2 Phorbol-ester/DAG-type zinc fingers span residues 171 to 222 (GHKF…VTAC) and 245 to 295 (PHKF…APNC). Serine 317 carries the phosphoserine modification. Residues 355 to 614 (FEFIRVLGKG…EHEILRHPFF (260 aa)) enclose the Protein kinase domain. ATP contacts are provided by residues 361-369 (LGKGSFGKV) and lysine 384. The active-site Proton acceptor is the aspartate 479. At threonine 513 the chain carries Phosphothreonine; by PDPK1. The region spanning 615–683 (KEIDWVQLNH…FSYVSPELQP (69 aa)) is the AGC-kinase C-terminal domain. Threonine 656 carries the phosphothreonine modification. Serine 675 carries the phosphoserine modification.

This sequence belongs to the protein kinase superfamily. AGC Ser/Thr protein kinase family. PKC subfamily. As to quaternary structure, interacts with FYN. Interacts with RALA. Interacts with DGKQ.

It localises to the cytoplasm. The enzyme catalyses L-seryl-[protein] + ATP = O-phospho-L-seryl-[protein] + ADP + H(+). It carries out the reaction L-threonyl-[protein] + ATP = O-phospho-L-threonyl-[protein] + ADP + H(+). Its activity is regulated as follows. Novel PKCs (PRKCD, PRKCE, PRKCH and PRKCQ) are calcium-insensitive, but activated by diacylglycerol (DAG) and phosphatidylserine. Three specific sites; Thr-513 (activation loop of the kinase domain), Thr-656 (turn motif) and Ser-675 (hydrophobic region), need to be phosphorylated for its full activation. Functionally, calcium-independent, phospholipid- and diacylglycerol (DAG)-dependent serine/threonine-protein kinase that is involved in the regulation of cell differentiation in keratinocytes and pre-B cell receptor, mediates regulation of epithelial tight junction integrity and foam cell formation, and is required for glioblastoma proliferation and apoptosis prevention in MCF-7 cells. In keratinocytes, binds and activates the tyrosine kinase FYN, which in turn blocks epidermal growth factor receptor (EGFR) signaling and leads to keratinocyte growth arrest and differentiation. Associates with the cyclin CCNE1-CDK2-CDKN1B complex and inhibits CDK2 kinase activity, leading to RB1 dephosphorylation and thereby G1 arrest in keratinocytes. In association with RALA activates actin depolymerization, which is necessary for keratinocyte differentiation. In the pre-B cell receptor signaling, functions downstream of BLNK by up-regulating IRF4, which in turn activates L chain gene rearrangement. Regulates epithelial tight junctions (TJs) by phosphorylating occludin (OCLN) on threonine residues, which is necessary for the assembly and maintenance of TJs. In association with PLD2 and via TLR4 signaling, is involved in lipopolysaccharide (LPS)-induced RGS2 down-regulation and foam cell formation. Upon PMA stimulation, mediates glioblastoma cell proliferation by activating the mTOR pathway, the PI3K/AKT pathway and the ERK1-dependent phosphorylation of ELK1. Involved in the protection of glioblastoma cells from irradiation-induced apoptosis by preventing caspase-9 activation. In camptothecin-treated MCF-7 cells, regulates NF-kappa-B upstream signaling by activating IKBKB, and confers protection against DNA damage-induced apoptosis. Promotes oncogenic functions of ATF2 in the nucleus while blocking its apoptotic function at mitochondria. Phosphorylates ATF2 which promotes its nuclear retention and transcriptional activity and negatively regulates its mitochondrial localization. The chain is Protein kinase C eta type (Prkch) from Rattus norvegicus (Rat).